Reading from the N-terminus, the 824-residue chain is Glycerol-3-phosphate acyltransferase (824 aa).

The short motif at 302-307 is the HXXXXD motif element; that stretch reads CHRSHM.

The protein belongs to the GPAT/DAPAT family.

It localises to the cell inner membrane. It catalyses the reaction sn-glycerol 3-phosphate + an acyl-CoA = a 1-acyl-sn-glycero-3-phosphate + CoA. The protein operates within phospholipid metabolism; CDP-diacylglycerol biosynthesis; CDP-diacylglycerol from sn-glycerol 3-phosphate: step 1/3. This chain is Glycerol-3-phosphate acyltransferase, found in Actinobacillus pleuropneumoniae serotype 5b (strain L20).